We begin with the raw amino-acid sequence, 357 residues long: NADH-quinone oxidoreductase subunit H (357 aa).

The next 8 helical transmembrane spans lie at 26 to 46 (LVKIIAVVAPLMGAVAYLTLW), 92 to 112 (ALFVIAPIMTIMPALAAWAVI), 127 to 147 (LLFVMAITSLEVYGVIVAGWA), 164 to 184 (MISYEIAMGFVLVIILMVTGS), 203 to 223 (GLTFLSWNWLPLLPMFFIYII), 259 to 279 (FFLAEYANMWLISIMATLMFL), 294 to 314 (VPGWIWLGLKTLMVVTMFIWF), and 329 to 349 (LGWKVFIPLTLVYLLIVAIWM).

This sequence belongs to the complex I subunit 1 family. As to quaternary structure, NDH-1 is composed of 14 different subunits. Subunits NuoA, H, J, K, L, M, N constitute the membrane sector of the complex.

The protein resides in the cell inner membrane. The enzyme catalyses a quinone + NADH + 5 H(+)(in) = a quinol + NAD(+) + 4 H(+)(out). Functionally, NDH-1 shuttles electrons from NADH, via FMN and iron-sulfur (Fe-S) centers, to quinones in the respiratory chain. The immediate electron acceptor for the enzyme in this species is believed to be ubiquinone. Couples the redox reaction to proton translocation (for every two electrons transferred, four hydrogen ions are translocated across the cytoplasmic membrane), and thus conserves the redox energy in a proton gradient. This subunit may bind ubiquinone. This chain is NADH-quinone oxidoreductase subunit H, found in Janthinobacterium sp. (strain Marseille) (Minibacterium massiliensis).